Here is a 179-residue protein sequence, read N- to C-terminus: Transcription initiation factor TFIID subunit 10 (179 aa).

The segment at 1-23 (MNDPEQYEPSSSTESVLMPPPAL) is disordered.

The protein belongs to the TAF10 family. In terms of assembly, component of the TFIID basal transcription factor complex, composed of TATA-box-binding protein tbp-1, and a number of TBP-associated factors (TAFs).

It localises to the nucleus. Functionally, the TFIID basal transcription factor complex plays a major role in the initiation of RNA polymerase II (Pol II)-dependent transcription. TFIID recognizes and binds promoters via its subunit tbp-1, a TATA-box-binding protein, and promotes assembly of the pre-initiation complex (PIC). The TFIID complex consists of tbp-1 and TBP-associated factors (TAFs), including taf-10. Essential for early embryonic development, but not required for transcription of some genes; probably acts via activating transcription initiation by RNA Pol II, as part of the TFIID complex. The protein is Transcription initiation factor TFIID subunit 10 of Caenorhabditis elegans.